The sequence spans 202 residues: Na(+)-translocating NADH-quinone reductase subunit E (202 aa).

The next 6 membrane-spanning stretches (helical) occupy residues 11–31 (AVFI…FLAV), 39–59 (FGLG…NNLI), 81–101 (FLKF…LEMA), 114–134 (GIFL…AFMV), 144–164 (VVFG…LAAV), and 180–200 (LGIT…FSGV).

Belongs to the NqrDE/RnfAE family. Composed of six subunits; NqrA, NqrB, NqrC, NqrD, NqrE and NqrF.

The protein resides in the cell inner membrane. The enzyme catalyses a ubiquinone + n Na(+)(in) + NADH + H(+) = a ubiquinol + n Na(+)(out) + NAD(+). Its function is as follows. NQR complex catalyzes the reduction of ubiquinone-1 to ubiquinol by two successive reactions, coupled with the transport of Na(+) ions from the cytoplasm to the periplasm. NqrA to NqrE are probably involved in the second step, the conversion of ubisemiquinone to ubiquinol. The chain is Na(+)-translocating NADH-quinone reductase subunit E from Idiomarina loihiensis (strain ATCC BAA-735 / DSM 15497 / L2-TR).